The sequence spans 297 residues: Nucleotide-binding protein Bphy_0322 (297 aa).

8-15 lines the ATP pocket; it reads GISGSGKS. 57 to 60 provides a ligand contact to GTP; sequence DARS.

Belongs to the RapZ-like family.

In terms of biological role, displays ATPase and GTPase activities. This Paraburkholderia phymatum (strain DSM 17167 / CIP 108236 / LMG 21445 / STM815) (Burkholderia phymatum) protein is Nucleotide-binding protein Bphy_0322.